The primary structure comprises 555 residues: Protein peste (555 aa).

The Cytoplasmic portion of the chain corresponds to 1-7; the sequence is MTSRTRH. The helical transmembrane segment at 8–28 threads the bilayer; sequence CARLGIVLLGICCIASGIYLF. Over 29–434 the chain is Extracellular; sequence RNWIDMFTRM…VRVSEEIAAD (406 aa). 7 N-linked (GlcNAc...) asparagine glycosylation sites follow: Asn70, Asn110, Asn129, Asn213, Asn242, Asn312, and Asn342. A helical transmembrane segment spans residues 435–455; sequence IALVPLIVLLGQIVTGILLAG. Residues 456–555 lie on the Cytoplasmic side of the membrane; it reads GLICTCWYPT…SEDSPDVVVR (100 aa).

It belongs to the CD36 family.

Its subcellular location is the cell membrane. (Microbial infection) Plays a role in mycobacterial infection. Mediates infection by M.fortuitum and uptake of M.smegmatis. The chain is Protein peste from Drosophila melanogaster (Fruit fly).